The following is a 362-amino-acid chain: Phosphoserine aminotransferase (362 aa).

Arg43 serves as a coordination point for L-glutamate. Pyridoxal 5'-phosphate contacts are provided by residues 77–78, Trp103, Thr153, Asp173, and Gln196; that span reads AS. N6-(pyridoxal phosphate)lysine is present on Lys197. 238-239 lines the pyridoxal 5'-phosphate pocket; sequence NT.

This sequence belongs to the class-V pyridoxal-phosphate-dependent aminotransferase family. SerC subfamily. Homodimer. Requires pyridoxal 5'-phosphate as cofactor.

The protein resides in the cytoplasm. The catalysed reaction is O-phospho-L-serine + 2-oxoglutarate = 3-phosphooxypyruvate + L-glutamate. It carries out the reaction 4-(phosphooxy)-L-threonine + 2-oxoglutarate = (R)-3-hydroxy-2-oxo-4-phosphooxybutanoate + L-glutamate. Its pathway is amino-acid biosynthesis; L-serine biosynthesis; L-serine from 3-phospho-D-glycerate: step 2/3. It functions in the pathway cofactor biosynthesis; pyridoxine 5'-phosphate biosynthesis; pyridoxine 5'-phosphate from D-erythrose 4-phosphate: step 3/5. Its function is as follows. Catalyzes the reversible conversion of 3-phosphohydroxypyruvate to phosphoserine and of 3-hydroxy-2-oxo-4-phosphonooxybutanoate to phosphohydroxythreonine. This is Phosphoserine aminotransferase (serC) from Niallia circulans (Bacillus circulans).